Here is a 54-residue protein sequence, read N- to C-terminus: MKIFFAILLILAVCSMAIWTVNGTPFEVRCATDADCSRKCPGNPPCRNGFCACT.

Positions 1-23 (MKIFFAILLILAVCSMAIWTVNG) are cleaved as a signal peptide.

It belongs to the short scorpion toxin superfamily. Potassium channel inhibitor family. Alpha-KTx 14 subfamily. Post-translationally, contains 3 disulfide bridges. In terms of tissue distribution, expressed by the venom gland.

It is found in the secreted. Potential blocker of potassium channels. This is Potassium channel toxin alpha-KTx 14.3 from Olivierus martensii (Manchurian scorpion).